Reading from the N-terminus, the 154-residue chain is Ribosome maturation factor RimP (154 aa).

This sequence belongs to the RimP family.

The protein localises to the cytoplasm. Required for maturation of 30S ribosomal subunits. In Thioalkalivibrio sulfidiphilus (strain HL-EbGR7), this protein is Ribosome maturation factor RimP.